The chain runs to 207 residues: Serotonin N-acetyltransferase (207 aa).

The segment at Met-1–Arg-28 is disordered. Thr-31 is modified (phosphothreonine; by PKA). One can recognise an N-acetyltransferase domain in the interval Ser-35–Arg-202. Leu-124 provides a ligand contact to substrate. Residues Leu-124–Val-126 and Gln-132–Pro-137 each bind acetyl-CoA. Substrate is bound at residue Met-159. Tyr-168–Arg-170 provides a ligand contact to acetyl-CoA. Ser-205 carries the phosphoserine modification.

The protein belongs to the acetyltransferase family. AANAT subfamily. In terms of assembly, monomer. Interacts with several 14-3-3 proteins, including YWHAB, YWHAE, YWHAG and YWHAZ, preferentially when phosphorylated at Thr-31. Phosphorylation on Ser-205 also allows binding to YWHAZ, but with lower affinity. The interaction with YWHAZ considerably increases affinity for arylalkylamines and acetyl-CoA and protects the enzyme from dephosphorylation and proteasomal degradation. It may also prevent thiol-dependent inactivation. Post-translationally, cAMP-dependent phosphorylation on both N-terminal Thr-31 and C-terminal Ser-205 regulates AANAT activity by promoting interaction with 14-3-3 proteins.

Its subcellular location is the cytoplasm. It carries out the reaction a 2-arylethylamine + acetyl-CoA = an N-acetyl-2-arylethylamine + CoA + H(+). The protein operates within aromatic compound metabolism; melatonin biosynthesis; melatonin from serotonin: step 1/2. Functionally, controls the night/day rhythm of melatonin production in the pineal gland. Catalyzes the N-acetylation of serotonin into N-acetylserotonin, the penultimate step in the synthesis of melatonin. This Pan troglodytes (Chimpanzee) protein is Serotonin N-acetyltransferase (AANAT).